A 155-amino-acid chain; its full sequence is Small ribosomal subunit protein uS7cz/uS7cy (155 aa).

It belongs to the universal ribosomal protein uS7 family. As to quaternary structure, part of the 30S ribosomal subunit.

The protein localises to the plastid. The protein resides in the chloroplast. One of the primary rRNA binding proteins, it binds directly to 16S rRNA where it nucleates assembly of the head domain of the 30S subunit. In Jasminum nudiflorum (Winter jasmine), this protein is Small ribosomal subunit protein uS7cz/uS7cy (rps7-A).